Reading from the N-terminus, the 438-residue chain is Adenylyltransferase and sulfurtransferase UBA4 (438 aa).

ATP is bound by residues G81, D102, 109 to 113 (SNLHR), K126, and 170 to 171 (DH). Zn(2+) is bound by residues C212 and C215. The active-site Glycyl thioester intermediate; for adenylyltransferase activity is the C229. C290 and C293 together coordinate Zn(2+). A Rhodanese domain is found at 340 to 436 (NKKKHILIDV…WSDDVDSKIP (97 aa)). C396 serves as the catalytic Cysteine persulfide intermediate; for sulfurtransferase activity.

The protein in the N-terminal section; belongs to the HesA/MoeB/ThiF family. UBA4 subfamily. Requires Zn(2+) as cofactor.

It localises to the cytoplasm. The protein localises to the cytosol. It participates in tRNA modification; 5-methoxycarbonylmethyl-2-thiouridine-tRNA biosynthesis. Plays a central role in 2-thiolation of mcm(5)S(2)U at tRNA wobble positions of cytosolic tRNA(Lys), tRNA(Glu) and tRNA(Gln). Acts by mediating the C-terminal thiocarboxylation of sulfur carrier URM1. Its N-terminus first activates URM1 as acyl-adenylate (-COAMP), then the persulfide sulfur on the catalytic cysteine is transferred to URM1 to form thiocarboxylation (-COSH) of its C-terminus. The reaction probably involves hydrogen sulfide that is generated from the persulfide intermediate and that acts as a nucleophile towards URM1. Subsequently, a transient disulfide bond is formed. Does not use thiosulfate as sulfur donor; NFS1 probably acting as a sulfur donor for thiocarboxylation reactions. Prior mcm(5) tRNA modification by the elongator complex is required for 2-thiolation. May also be involved in protein urmylation. This chain is Adenylyltransferase and sulfurtransferase UBA4, found in Candida albicans (strain SC5314 / ATCC MYA-2876) (Yeast).